We begin with the raw amino-acid sequence, 553 residues long: Phospholipase B-like 1 (553 aa).

The signal sequence occupies residues 1 to 38; the sequence is MTRGGPGGRPGLPQPPPLLLLLLLLPLLLVTAEPPKPA. Residue Asn71 is glycosylated (N-linked (GlcNAc...) (high mannose) asparagine; alternate). An N-linked (GlcNAc...) (hybrid) asparagine; alternate glycan is attached at Asn71. Positions 209-227 are cleaved as a propeptide — removed in mature form; that stretch reads LSPTKNGSLKVFKRWDMGH. 2 N-linked (GlcNAc...) (high mannose) asparagine; alternate glycosylation sites follow: Asn308 and Asn366. N-linked (GlcNAc...) (hybrid) asparagine; alternate glycans are attached at residues Asn308 and Asn366. Asn411 carries N-linked (GlcNAc...) asparagine glycosylation. 2 disulfide bridges follow: Cys470–Cys475 and Cys474–Cys489. An N-linked (GlcNAc...) (high mannose) asparagine; alternate glycan is attached at Asn526. A glycan (N-linked (GlcNAc...) (hybrid) asparagine; alternate) is linked at Asn526.

It belongs to the phospholipase B-like family. In terms of assembly, may form a homodimer, each monomer is composed of a chain A and a chain B. In terms of processing, the maturation cleavages that produces chains A and B are required to open the putative substrate binding pocket. Both chains A and B remain associated in the mature protein. Expressed in neutrophils and monocytes.

The protein localises to the lysosome. Its function is as follows. In view of the small size of the putative binding pocket, it has been proposed that it may act as an amidase or a peptidase. Exhibits a weak phospholipase activity, acting on various phospholipids, including phosphatidylcholine, phosphatidylinositol, phosphatidylethanolamine and lysophospholipids. The sequence is that of Phospholipase B-like 1 (PLBD1) from Homo sapiens (Human).